Reading from the N-terminus, the 111-residue chain is COX assembly mitochondrial protein (111 aa).

A CHCH domain is found at 39–82; the sequence is YKKCANFVQAMADCAKANGMKVFPTCDKQRDEMKSCLLFYQTDE. 2 consecutive short sequence motifs (cx9C motif) follow at residues 42-52 and 64-74; these read CANFVQAMADC and CDKQRDEMKSC. Intrachain disulfides connect cysteine 42–cysteine 74 and cysteine 52–cysteine 64.

It belongs to the CMC family.

It is found in the mitochondrion inner membrane. In terms of biological role, required for mitochondrial cytochrome c oxidase (COX) assembly and respiration. Binds copper. May be involved in copper trafficking and distribution to mitochondrial COX and SOD1. This is COX assembly mitochondrial protein (CMC1) from Saccharomyces cerevisiae (strain RM11-1a) (Baker's yeast).